Reading from the N-terminus, the 165-residue chain is Disulfide bond formation protein B (165 aa).

At 1-10 the chain is on the cytoplasmic side; the sequence is MPAWLTNRTI. A helical transmembrane segment spans residues 11-27; the sequence is YFLCFLAIAGLMGFAFY. At 28-45 the chain is on the periplasmic side; that stretch reads LQYVKDLEPCPLCMAQRI. Cysteines 37 and 40 form a disulfide. The chain crosses the membrane as a helical span at residues 46–62; that stretch reads AFVLAGLVFLAAALHNP. Residues 63–68 lie on the Cytoplasmic side of the membrane; sequence KNTGTT. The chain crosses the membrane as a helical span at residues 69 to 86; that stretch reads VYAFLGWVTTLGGAALAT. Residues 87 to 143 lie on the Periplasmic side of the membrane; it reads RQLWLQSLPADQVPACGPGLEYMLEAFPFSEVLTMMLTGTGECAEVQWTFLGLSIPG. Cys102 and Cys129 form a disulfide bridge. A helical membrane pass occupies residues 144–162; the sequence is WTLVAFIGFTAVWAFAWVR. At 163 to 165 the chain is on the cytoplasmic side; sequence RPR.

This sequence belongs to the DsbB family.

Its subcellular location is the cell inner membrane. Its function is as follows. Required for disulfide bond formation in some periplasmic proteins. Acts by oxidizing the DsbA protein. This Hahella chejuensis (strain KCTC 2396) protein is Disulfide bond formation protein B.